The primary structure comprises 173 residues: Thiol-disulfide oxidoreductase ResA (173 aa).

The helical; Signal-anchor for type II membrane protein transmembrane segment at 10 to 29 threads the bilayer; that stretch reads VIILLILSGAVGFTLYQGYF. Positions 35-173 constitute a Thioredoxin domain; it reads MEIGKEAPNF…LEEYLKKITP (139 aa). Cysteine 73 and cysteine 76 are disulfide-bonded.

It belongs to the thioredoxin family. ResA subfamily.

Its subcellular location is the cell membrane. The protein operates within protein modification; cytochrome c assembly. Functionally, thiol-disulfide oxidoreductase which is required in disulfide reduction during c-type cytochrome synthesis. May accept reducing equivalents from CcdA, leading to breakage of disulfide bonds in apocytochrome c; following this reduction heme can be covalently attached. This is Thiol-disulfide oxidoreductase ResA from Bacillus cereus (strain ATCC 10987 / NRS 248).